Consider the following 371-residue polypeptide: Transcription termination/antitermination protein NusA (371 aa).

The S1 motif domain maps to 135-199 (EDIMTGIVQR…KGPQIYVSRT (65 aa)). One can recognise a KH domain in the interval 301 to 367 (EKATTVIVPD…EPLFTEPETA (67 aa)). Residues 347–371 (GIYPRELEEDDEPLFTEPETAESDE) are disordered. The segment covering 353 to 371 (LEEDDEPLFTEPETAESDE) has biased composition (acidic residues).

It belongs to the NusA family. In terms of assembly, monomer. Binds directly to the core enzyme of the DNA-dependent RNA polymerase and to nascent RNA.

The protein resides in the cytoplasm. Functionally, participates in both transcription termination and antitermination. This is Transcription termination/antitermination protein NusA from Bacillus subtilis (strain 168).